Reading from the N-terminus, the 235-residue chain is Small ribosomal subunit protein uS3 (235 aa).

In terms of domain architecture, KH type-2 spans 39-107; it reads VRKFLNKELA…PAQINIAEVK (69 aa).

It belongs to the universal ribosomal protein uS3 family. In terms of assembly, part of the 30S ribosomal subunit. Forms a tight complex with proteins S10 and S14.

Binds the lower part of the 30S subunit head. Binds mRNA in the 70S ribosome, positioning it for translation. The polypeptide is Small ribosomal subunit protein uS3 (Mannheimia succiniciproducens (strain KCTC 0769BP / MBEL55E)).